A 102-amino-acid polypeptide reads, in one-letter code: Large ribosomal subunit protein bL36m (102 aa).

It belongs to the bacterial ribosomal protein bL36 family. As to quaternary structure, component of the mitochondrial ribosome large subunit (39S) which comprises a 16S rRNA and about 50 distinct proteins.

It localises to the mitochondrion. The chain is Large ribosomal subunit protein bL36m (Mrpl36) from Mus musculus (Mouse).